Reading from the N-terminus, the 464-residue chain is NADH-quinone oxidoreductase subunit N (464 aa).

Transmembrane regions (helical) follow at residues 6-26 (FLYI…LVLG), 36-56 (SMSL…LIYF), 75-95 (CLAR…FFFA), 101-121 (YEFA…VEAH), 123-143 (FLSF…LVCF), 157-177 (FFVL…LVYG), 197-217 (LGAT…LGAV), 231-253 (PTVA…FAGL), 257-279 (VVIP…MVVG), 293-313 (FAYA…TGVV), 317-337 (PVLF…TVLL), 360-380 (AFTF…SGFF), 395-415 (FGVP…IPCF), and 439-459 (NVGL…VVLL).

This sequence belongs to the complex I subunit 2 family. In terms of assembly, NDH-1 is composed of 14 different subunits. Subunits NuoA, H, J, K, L, M, N constitute the membrane sector of the complex.

The protein localises to the cell inner membrane. It catalyses the reaction a quinone + NADH + 5 H(+)(in) = a quinol + NAD(+) + 4 H(+)(out). In terms of biological role, NDH-1 shuttles electrons from NADH, via FMN and iron-sulfur (Fe-S) centers, to quinones in the respiratory chain. The immediate electron acceptor for the enzyme in this species is believed to be ubiquinone. Couples the redox reaction to proton translocation (for every two electrons transferred, four hydrogen ions are translocated across the cytoplasmic membrane), and thus conserves the redox energy in a proton gradient. This Anaplasma phagocytophilum (strain HZ) protein is NADH-quinone oxidoreductase subunit N.